A 137-amino-acid polypeptide reads, in one-letter code: MLQPKRTKFRKMQKGRNRGLALRGNQVSFGEFGLKSTERGRLTARQIEAARRAMTRHIKRGGRIWIRVFPDKPITQKPLEVRQGKGKGSVEYWVAQIQPGKMLYEVEGVSEQLAREAFALAAAKLPLSTTFVTRTVM.

This sequence belongs to the universal ribosomal protein uL16 family. Part of the 50S ribosomal subunit.

Functionally, binds 23S rRNA and is also seen to make contacts with the A and possibly P site tRNAs. This chain is Large ribosomal subunit protein uL16, found in Marinomonas sp. (strain MWYL1).